A 37-amino-acid polypeptide reads, in one-letter code: Large ribosomal subunit protein bL36c (37 aa).

Belongs to the bacterial ribosomal protein bL36 family.

The protein resides in the plastid. It localises to the chloroplast. This is Large ribosomal subunit protein bL36c from Pleurastrum terricola (Filamentous green alga).